Consider the following 176-residue polypeptide: Large ribosomal subunit protein uL6 (176 aa).

This sequence belongs to the universal ribosomal protein uL6 family. Part of the 50S ribosomal subunit.

Functionally, this protein binds to the 23S rRNA, and is important in its secondary structure. It is located near the subunit interface in the base of the L7/L12 stalk, and near the tRNA binding site of the peptidyltransferase center. The sequence is that of Large ribosomal subunit protein uL6 from Burkholderia cenocepacia (strain HI2424).